The following is a 498-amino-acid chain: Zinc finger protein 395 (498 aa).

The interval 129–165 is disordered; it reads QKPLSSPIEQSLPTSPGATSTSAQRSVSRSIDVPKRR. Over residues 130–157 the composition is skewed to polar residues; sequence KPLSSPIEQSLPTSPGATSTSAQRSVSR. The Nuclear export signal motif lies at 171–180; the sequence is MDEMMAAMVL. Residues 209–245 are disordered; sequence KEGGDVSDSGSSTTSGHWSASSGVSTPSPPHTDASPK. A compositionally biased stretch (low complexity) spans 214–231; it reads VSDSGSSTTSGHWSASSG. The segment at 285–310 adopts a C2H2-type zinc-finger fold; sequence YKCLWPNCGKLLRSIVGIKRHVKTQH.

It localises to the cytoplasm. Its subcellular location is the nucleus. The sequence is that of Zinc finger protein 395 (znf395) from Xenopus laevis (African clawed frog).